The following is a 159-amino-acid chain: Putative ribosomal RNA large subunit methyltransferase H (159 aa).

S-adenosyl-L-methionine is bound by residues Leu76, Gly108, and 127 to 132; that span reads FSKMTF.

Belongs to the RNA methyltransferase RlmH family.

The protein localises to the cytoplasm. It catalyses the reaction pseudouridine(1915) in 23S rRNA + S-adenosyl-L-methionine = N(3)-methylpseudouridine(1915) in 23S rRNA + S-adenosyl-L-homocysteine + H(+). Functionally, specifically methylates the pseudouridine at position 1915 (m3Psi1915) in 23S rRNA. This is Putative ribosomal RNA large subunit methyltransferase H from Methanococcus maripaludis (strain DSM 14266 / JCM 13030 / NBRC 101832 / S2 / LL).